The primary structure comprises 606 residues: Neutral/alkaline invertase 3, chloroplastic (606 aa).

The transit peptide at 1 to 58 (MGIAEVALHSMPGAFAAHSPASNLPLAADAARGRRRRSANSLHSSRALQGPVRFPGLR) directs the protein to the chloroplast. Residues 97-126 (RVPGQAVGGNGSVNGSAAKPPPQRRKASSV) form a disordered region.

Belongs to the glycosyl hydrolase 100 family.

Its subcellular location is the plastid. The protein resides in the chloroplast. The catalysed reaction is Hydrolysis of terminal non-reducing beta-D-fructofuranoside residues in beta-D-fructofuranosides.. Mitochondrial invertase that cleaves sucrose into glucose and fructose. The sequence is that of Neutral/alkaline invertase 3, chloroplastic from Oryza sativa subsp. japonica (Rice).